We begin with the raw amino-acid sequence, 59 residues long: MAQIKITLVNSPIGRIPAQRKTVKALGLGKLNSSVVKEGSPAILGMVNSISHLVKVEEA.

It belongs to the universal ribosomal protein uL30 family. As to quaternary structure, part of the 50S ribosomal subunit.

The polypeptide is Large ribosomal subunit protein uL30 (Lactococcus lactis subsp. lactis (strain IL1403) (Streptococcus lactis)).